Reading from the N-terminus, the 33-residue chain is Pheromone biosynthesis-activating neuropeptide (33 aa).

The tract at residues 1–33 (LADDMPATMADQEVYRPEPEQIDSRNKYFSPRL) is disordered. The span at 13–26 (EVYRPEPEQIDSRN) shows a compositional bias: basic and acidic residues. L33 is subject to Leucine amide.

The protein belongs to the pyrokinin family.

It is found in the secreted. Functionally, involved in the control of pheromone production in females. This is Pheromone biosynthesis-activating neuropeptide from Lymantria dispar (Gypsy moth).